The sequence spans 228 residues: Secreted LysM effector ECP6 (228 aa).

Positions 1–18 (MQSMILFAAALMGAAVNG) are cleaved as a signal peptide. Cystine bridges form between Cys-36/Cys-90, Cys-64/Cys-98, Cys-109/Cys-163, and Cys-168/Cys-220. The region spanning 42 to 86 (IKYTVVKGDTLTSIAKKFKSGICNIVSVNKLANPNLIELGATLII) is the LysM 1 domain. Thr-51, Thr-53, Asn-76, and Ile-78 together coordinate chitin. N-linked (GlcNAc...) asparagine glycosylation is found at Asn-89, Asn-95, Asn-127, and Asn-133. LysM domains are found at residues 115–160 (GSYT…IITV) and 172–216 (GTYN…QIIL). Gly-179, Leu-181, Val-183, Pro-205, Ser-206, and Leu-208 together coordinate chitin. An N-linked (GlcNAc...) asparagine glycan is attached at Asn-222.

Belongs to the secreted LysM effector family. As to quaternary structure, forms homodimers.

Its subcellular location is the secreted. Its function is as follows. Secreted effector that enables the plant pathogenic fungus to manipulate host defenses for successful infection. Binds chitine, but not to any other glycan, including the N-linked glycan chitobiose. Outcompetes host immune receptor for chitin binding through intrachain LysM dimerization. During infection, sequesters chitin oligosaccharides that are released from the cell walls of invading hyphae to prevent elicitation of host immunity. The protein is Secreted LysM effector ECP6 of Passalora fulva (Tomato leaf mold).